We begin with the raw amino-acid sequence, 196 residues long: Holliday junction branch migration complex subunit RuvA (196 aa).

Residues 1 to 63 form a domain I region; sequence MYEYFKGIIS…EDAELLYGFA (63 aa). The tract at residues 64–142 is domain II; the sequence is TEEEKQLFLS…AADGLAESKA (79 aa). Residues 143–146 form a flexible linker region; it reads PVQT. Positions 147–196 are domain III; the sequence is VDNQELEEAMEAMLALGYKATELKKIKKFFEGTTDTAENYIKSALKMLVK.

It belongs to the RuvA family. As to quaternary structure, homotetramer. Forms an RuvA(8)-RuvB(12)-Holliday junction (HJ) complex. HJ DNA is sandwiched between 2 RuvA tetramers; dsDNA enters through RuvA and exits via RuvB. An RuvB hexamer assembles on each DNA strand where it exits the tetramer. Each RuvB hexamer is contacted by two RuvA subunits (via domain III) on 2 adjacent RuvB subunits; this complex drives branch migration. In the full resolvosome a probable DNA-RuvA(4)-RuvB(12)-RuvC(2) complex forms which resolves the HJ.

The protein resides in the cytoplasm. Its function is as follows. The RuvA-RuvB-RuvC complex processes Holliday junction (HJ) DNA during genetic recombination and DNA repair, while the RuvA-RuvB complex plays an important role in the rescue of blocked DNA replication forks via replication fork reversal (RFR). RuvA specifically binds to HJ cruciform DNA, conferring on it an open structure. The RuvB hexamer acts as an ATP-dependent pump, pulling dsDNA into and through the RuvAB complex. HJ branch migration allows RuvC to scan DNA until it finds its consensus sequence, where it cleaves and resolves the cruciform DNA. The sequence is that of Holliday junction branch migration complex subunit RuvA from Streptococcus gordonii (strain Challis / ATCC 35105 / BCRC 15272 / CH1 / DL1 / V288).